The sequence spans 406 residues: Peptidase T (406 aa).

H78 serves as a coordination point for Zn(2+). D80 is an active-site residue. A Zn(2+)-binding site is contributed by D139. Catalysis depends on E173, which acts as the Proton acceptor. Residues E174, D196, and H378 each coordinate Zn(2+).

It belongs to the peptidase M20B family. Zn(2+) is required as a cofactor.

Its subcellular location is the cytoplasm. It carries out the reaction Release of the N-terminal residue from a tripeptide.. Cleaves the N-terminal amino acid of tripeptides. The polypeptide is Peptidase T (Clostridium perfringens (strain ATCC 13124 / DSM 756 / JCM 1290 / NCIMB 6125 / NCTC 8237 / Type A)).